A 467-amino-acid polypeptide reads, in one-letter code: Na(+)-translocating NADH-quinone reductase subunit A (467 aa).

It belongs to the NqrA family. As to quaternary structure, composed of six subunits; NqrA, NqrB, NqrC, NqrD, NqrE and NqrF.

The enzyme catalyses a ubiquinone + n Na(+)(in) + NADH + H(+) = a ubiquinol + n Na(+)(out) + NAD(+). NQR complex catalyzes the reduction of ubiquinone-1 to ubiquinol by two successive reactions, coupled with the transport of Na(+) ions from the cytoplasm to the periplasm. NqrA to NqrE are probably involved in the second step, the conversion of ubisemiquinone to ubiquinol. The protein is Na(+)-translocating NADH-quinone reductase subunit A of Chlamydia pneumoniae (Chlamydophila pneumoniae).